Reading from the N-terminus, the 211-residue chain is Pyridoxine/pyridoxamine 5'-phosphate oxidase (211 aa).

Substrate-binding positions include Arg-8–Tyr-11 and Lys-66. FMN is bound by residues Arg-61–Lys-66, Phe-76–Thr-77, Lys-83, and Gln-105. Positions 123, 127, and 131 each coordinate substrate. FMN contacts are provided by residues Gln-140–Ser-141 and Trp-184. Arg-190–His-192 is a substrate binding site. An FMN-binding site is contributed by Arg-194.

It belongs to the pyridoxamine 5'-phosphate oxidase family. Homodimer. FMN is required as a cofactor.

It catalyses the reaction pyridoxamine 5'-phosphate + O2 + H2O = pyridoxal 5'-phosphate + H2O2 + NH4(+). The catalysed reaction is pyridoxine 5'-phosphate + O2 = pyridoxal 5'-phosphate + H2O2. Its pathway is cofactor metabolism; pyridoxal 5'-phosphate salvage; pyridoxal 5'-phosphate from pyridoxamine 5'-phosphate: step 1/1. It functions in the pathway cofactor metabolism; pyridoxal 5'-phosphate salvage; pyridoxal 5'-phosphate from pyridoxine 5'-phosphate: step 1/1. Functionally, catalyzes the oxidation of either pyridoxine 5'-phosphate (PNP) or pyridoxamine 5'-phosphate (PMP) into pyridoxal 5'-phosphate (PLP). In Mannheimia succiniciproducens (strain KCTC 0769BP / MBEL55E), this protein is Pyridoxine/pyridoxamine 5'-phosphate oxidase.